Here is a 418-residue protein sequence, read N- to C-terminus: Serine hydroxymethyltransferase (418 aa).

(6S)-5,6,7,8-tetrahydrofolate contacts are provided by residues L121 and 125-127 (GHL). K230 carries the post-translational modification N6-(pyridoxal phosphate)lysine. Residue 355 to 357 (SPF) participates in (6S)-5,6,7,8-tetrahydrofolate binding.

It belongs to the SHMT family. In terms of assembly, homodimer. Requires pyridoxal 5'-phosphate as cofactor.

It is found in the cytoplasm. It catalyses the reaction (6R)-5,10-methylene-5,6,7,8-tetrahydrofolate + glycine + H2O = (6S)-5,6,7,8-tetrahydrofolate + L-serine. Its pathway is one-carbon metabolism; tetrahydrofolate interconversion. It participates in amino-acid biosynthesis; glycine biosynthesis; glycine from L-serine: step 1/1. Functionally, catalyzes the reversible interconversion of serine and glycine with tetrahydrofolate (THF) serving as the one-carbon carrier. This reaction serves as the major source of one-carbon groups required for the biosynthesis of purines, thymidylate, methionine, and other important biomolecules. Also exhibits THF-independent aldolase activity toward beta-hydroxyamino acids, producing glycine and aldehydes, via a retro-aldol mechanism. The protein is Serine hydroxymethyltransferase of Streptococcus pneumoniae (strain P1031).